Consider the following 319-residue polypeptide: Annexin A4 (319 aa).

Position 2 is an N-acetylalanine (A2). Phosphothreonine is present on T7. Residue S12 is modified to Phosphoserine. 4 Annexin repeats span residues 14–85, 86–157, 169–241, and 245–316; these read FSAT…GMIT, PTVL…SLSA, ALMR…AIVK, and NKSA…ILCG. An N6-acetyllysine mark is found at K213, K293, and K300.

The protein belongs to the annexin family. As to expression, expressed in pancreas (at protein level). Also detected in liver, spleen, intestine, stomach, kidney, and adrenal glands.

Its subcellular location is the zymogen granule membrane. Its function is as follows. Calcium/phospholipid-binding protein which promotes membrane fusion and is involved in exocytosis. The protein is Annexin A4 (ANXA4) of Canis lupus familiaris (Dog).